A 165-amino-acid chain; its full sequence is MKTYRRQIREKILQALYTLELRDTDIESAANWLLTKEIQEDPNAMKFFNLLLKNIKEHREEIDQYIARHTFNWDMSRIAIIDKNILRMALAELLYCEDIPPKVSINEAIEIAKKFSSTDKSSKFVNGILDAIFNELKAEGKIHKNGRGLIDHSAIKLQKESETPE.

This sequence belongs to the NusB family.

Involved in transcription antitermination. Required for transcription of ribosomal RNA (rRNA) genes. Binds specifically to the boxA antiterminator sequence of the ribosomal RNA (rrn) operons. This Chlorobium phaeobacteroides (strain DSM 266 / SMG 266 / 2430) protein is Transcription antitermination protein NusB.